The following is a 66-amino-acid chain: Large ribosomal subunit protein bL33 (66 aa).

It belongs to the bacterial ribosomal protein bL33 family.

The sequence is that of Large ribosomal subunit protein bL33 from Synechococcus sp. (strain CC9902).